Here is a 307-residue protein sequence, read N- to C-terminus: D-alanine--D-alanine ligase (307 aa).

The ATP-grasp domain occupies 101-301; the sequence is RDVLAAAGVP…FGELVRWMVD (201 aa). An ATP-binding site is contributed by 128-182; that stretch reads LPPPYVIKPLGEGSSFGVFIVREDQAYPPQELTRSDWAFGNRVLVESYIGGRELT. Mg(2+) contacts are provided by Asp-251, Glu-268, and Asn-270.

It belongs to the D-alanine--D-alanine ligase family. The cofactor is Mg(2+). Mn(2+) serves as cofactor.

The protein resides in the cytoplasm. It catalyses the reaction 2 D-alanine + ATP = D-alanyl-D-alanine + ADP + phosphate + H(+). It participates in cell wall biogenesis; peptidoglycan biosynthesis. In terms of biological role, cell wall formation. This Beijerinckia indica subsp. indica (strain ATCC 9039 / DSM 1715 / NCIMB 8712) protein is D-alanine--D-alanine ligase.